We begin with the raw amino-acid sequence, 209 residues long: MVSLQFITHQTDRYTYFESALMALEGGCKWIQLRMKEAPCEEVEAVALQLKPLCKEKEAILLLDDHVELAKKLEVDGVHLGKKDMPIDQARQLLGEAFIIGGTANTFEDVVQHYRAGADYLGIGPFRFTTTKKNLSPVLGLEGYTAILSQMKEANIELPVVAIGGITREDIPAILETGVNGIALSGTILRAEDPAAETRKILNMKRIIK.

Residues 32-36 (QLRMK) and Asp-64 each bind 4-amino-2-methyl-5-(diphosphooxymethyl)pyrimidine. 2 residues coordinate Mg(2+): Asp-65 and Asp-84. 4-amino-2-methyl-5-(diphosphooxymethyl)pyrimidine is bound at residue Thr-103. 129–131 (TTT) contributes to the 2-[(2R,5Z)-2-carboxy-4-methylthiazol-5(2H)-ylidene]ethyl phosphate binding site. Lys-132 contributes to the 4-amino-2-methyl-5-(diphosphooxymethyl)pyrimidine binding site. Gly-165 contacts 2-[(2R,5Z)-2-carboxy-4-methylthiazol-5(2H)-ylidene]ethyl phosphate.

It belongs to the thiamine-phosphate synthase family. The cofactor is Mg(2+).

It carries out the reaction 2-[(2R,5Z)-2-carboxy-4-methylthiazol-5(2H)-ylidene]ethyl phosphate + 4-amino-2-methyl-5-(diphosphooxymethyl)pyrimidine + 2 H(+) = thiamine phosphate + CO2 + diphosphate. The enzyme catalyses 2-(2-carboxy-4-methylthiazol-5-yl)ethyl phosphate + 4-amino-2-methyl-5-(diphosphooxymethyl)pyrimidine + 2 H(+) = thiamine phosphate + CO2 + diphosphate. The catalysed reaction is 4-methyl-5-(2-phosphooxyethyl)-thiazole + 4-amino-2-methyl-5-(diphosphooxymethyl)pyrimidine + H(+) = thiamine phosphate + diphosphate. It participates in cofactor biosynthesis; thiamine diphosphate biosynthesis; thiamine phosphate from 4-amino-2-methyl-5-diphosphomethylpyrimidine and 4-methyl-5-(2-phosphoethyl)-thiazole: step 1/1. Condenses 4-methyl-5-(beta-hydroxyethyl)thiazole monophosphate (THZ-P) and 2-methyl-4-amino-5-hydroxymethyl pyrimidine pyrophosphate (HMP-PP) to form thiamine monophosphate (TMP). The sequence is that of Thiamine-phosphate synthase from Bacteroides thetaiotaomicron (strain ATCC 29148 / DSM 2079 / JCM 5827 / CCUG 10774 / NCTC 10582 / VPI-5482 / E50).